Here is a 545-residue protein sequence, read N- to C-terminus: Chaperonin GroEL (545 aa).

ATP-binding positions include 30–33 (TLGP), Lys-51, 87–91 (DGTTT), Gly-415, 479–481 (NAA), and Asp-495. Positions 526-545 (KDDAPAPAMPDMGGMGGMGM) are disordered.

The protein belongs to the chaperonin (HSP60) family. In terms of assembly, forms a cylinder of 14 subunits composed of two heptameric rings stacked back-to-back. Interacts with the co-chaperonin GroES.

The protein resides in the cytoplasm. It carries out the reaction ATP + H2O + a folded polypeptide = ADP + phosphate + an unfolded polypeptide.. Functionally, together with its co-chaperonin GroES, plays an essential role in assisting protein folding. The GroEL-GroES system forms a nano-cage that allows encapsulation of the non-native substrate proteins and provides a physical environment optimized to promote and accelerate protein folding. In Paracidovorax citrulli (strain AAC00-1) (Acidovorax citrulli), this protein is Chaperonin GroEL.